Here is a 662-residue protein sequence, read N- to C-terminus: UvrABC system protein B (662 aa).

The 158-residue stretch at 31 to 188 (DNIEGGEKAQ…NDLVDIQFER (158 aa)) folds into the Helicase ATP-binding domain. 44–51 (GATGTGKT) contributes to the ATP binding site. A Beta-hairpin motif is present at residues 97–120 (YYDYYQPEAYVPSSDTYIEKDSSV). Residues 435-601 (QIDDLLGEIN…TIKKEIRDLI (167 aa)) enclose the Helicase C-terminal domain. Residues 626 to 661 (KELVKKLEKQMQEAVEVLDFELAAQIRDMMLEVKAL) form the UVR domain.

Belongs to the UvrB family. As to quaternary structure, forms a heterotetramer with UvrA during the search for lesions. Interacts with UvrC in an incision complex.

It is found in the cytoplasm. In terms of biological role, the UvrABC repair system catalyzes the recognition and processing of DNA lesions. A damage recognition complex composed of 2 UvrA and 2 UvrB subunits scans DNA for abnormalities. Upon binding of the UvrA(2)B(2) complex to a putative damaged site, the DNA wraps around one UvrB monomer. DNA wrap is dependent on ATP binding by UvrB and probably causes local melting of the DNA helix, facilitating insertion of UvrB beta-hairpin between the DNA strands. Then UvrB probes one DNA strand for the presence of a lesion. If a lesion is found the UvrA subunits dissociate and the UvrB-DNA preincision complex is formed. This complex is subsequently bound by UvrC and the second UvrB is released. If no lesion is found, the DNA wraps around the other UvrB subunit that will check the other stand for damage. The chain is UvrABC system protein B from Streptococcus pneumoniae (strain Hungary19A-6).